The following is a 122-amino-acid chain: Large ribosomal subunit protein uL14c (122 aa).

The protein belongs to the universal ribosomal protein uL14 family. As to quaternary structure, part of the 50S ribosomal subunit.

It is found in the plastid. Functionally, binds to 23S rRNA. This Helicosporidium sp. subsp. Simulium jonesii (Green alga) protein is Large ribosomal subunit protein uL14c (rpl14).